Here is a 393-residue protein sequence, read N- to C-terminus: NAD(P)H-quinone oxidoreductase subunit H, chloroplastic (393 aa).

This sequence belongs to the complex I 49 kDa subunit family. In terms of assembly, NDH is composed of at least 16 different subunits, 5 of which are encoded in the nucleus.

The protein localises to the plastid. Its subcellular location is the chloroplast thylakoid membrane. The catalysed reaction is a plastoquinone + NADH + (n+1) H(+)(in) = a plastoquinol + NAD(+) + n H(+)(out). It catalyses the reaction a plastoquinone + NADPH + (n+1) H(+)(in) = a plastoquinol + NADP(+) + n H(+)(out). In terms of biological role, NDH shuttles electrons from NAD(P)H:plastoquinone, via FMN and iron-sulfur (Fe-S) centers, to quinones in the photosynthetic chain and possibly in a chloroplast respiratory chain. The immediate electron acceptor for the enzyme in this species is believed to be plastoquinone. Couples the redox reaction to proton translocation, and thus conserves the redox energy in a proton gradient. The protein is NAD(P)H-quinone oxidoreductase subunit H, chloroplastic of Vitis vinifera (Grape).